The chain runs to 102 residues: Thioredoxin (102 aa).

The Thioredoxin domain occupies 1 to 102 (MVQIVSQDNF…SLVKLISKHQ (102 aa)). A disulfide bond links cysteine 28 and cysteine 31.

Belongs to the thioredoxin family.

In terms of biological role, participates in various redox reactions through the reversible oxidation of its active center dithiol to a disulfide and catalyzes dithiol-disulfide exchange reactions. This Chlamydia muridarum (strain MoPn / Nigg) protein is Thioredoxin (trxA).